Consider the following 98-residue polypeptide: NADH-ubiquinone oxidoreductase chain 4L (98 aa).

The next 3 helical transmembrane spans lie at 2-22, 26-46, and 59-79; these read TSAF…TFMF, LMST…MTST, and IPIT…ALLV.

Belongs to the complex I subunit 4L family. Core subunit of respiratory chain NADH dehydrogenase (Complex I) which is composed of 45 different subunits.

Its subcellular location is the mitochondrion inner membrane. The enzyme catalyses a ubiquinone + NADH + 5 H(+)(in) = a ubiquinol + NAD(+) + 4 H(+)(out). In terms of biological role, core subunit of the mitochondrial membrane respiratory chain NADH dehydrogenase (Complex I) which catalyzes electron transfer from NADH through the respiratory chain, using ubiquinone as an electron acceptor. Part of the enzyme membrane arm which is embedded in the lipid bilayer and involved in proton translocation. This chain is NADH-ubiquinone oxidoreductase chain 4L, found in Rattus norvegicus (Rat).